Reading from the N-terminus, the 380-residue chain is Probable peptidoglycan glycosyltransferase FtsW (380 aa).

Helical transmembrane passes span 14–34 (LLWC…SSSI), 52–72 (ILYL…PISF), 79–99 (IILL…NSIH), 112–131 (MQPS…NYLS), 141–161 (FGGF…LLVE), 162–182 (PDLG…FISG), 188–208 (FIPT…KSPY), 268–288 (IIGE…IFFI), 304–324 (IFFS…QTLI), and 341–361 (PLIS…IILI).

Belongs to the SEDS family. FtsW subfamily.

The protein resides in the cell membrane. It catalyses the reaction [GlcNAc-(1-&gt;4)-Mur2Ac(oyl-L-Ala-gamma-D-Glu-L-Lys-D-Ala-D-Ala)](n)-di-trans,octa-cis-undecaprenyl diphosphate + beta-D-GlcNAc-(1-&gt;4)-Mur2Ac(oyl-L-Ala-gamma-D-Glu-L-Lys-D-Ala-D-Ala)-di-trans,octa-cis-undecaprenyl diphosphate = [GlcNAc-(1-&gt;4)-Mur2Ac(oyl-L-Ala-gamma-D-Glu-L-Lys-D-Ala-D-Ala)](n+1)-di-trans,octa-cis-undecaprenyl diphosphate + di-trans,octa-cis-undecaprenyl diphosphate + H(+). Its pathway is cell wall biogenesis; peptidoglycan biosynthesis. Its function is as follows. Peptidoglycan polymerase that is essential for cell division. This Buchnera aphidicola subsp. Baizongia pistaciae (strain Bp) protein is Probable peptidoglycan glycosyltransferase FtsW.